Consider the following 64-residue polypeptide: Phylloxin-B1 (64 aa).

Residues 1-22 form the signal peptide; that stretch reads MVFLKKSLLLVLFVGLVSLSIC. Positions 23-42 are excised as a propeptide; the sequence is EENKREEHEEIEENKEKAEE. At Q63 the chain carries Glutamine amide.

In terms of tissue distribution, expressed by the skin glands.

The protein resides in the secreted. Antimicrobial peptide against the wall-less bacteria A.laidlawii and S.melliferum, the Gram-positive bacteria B.megaterium KM, C.glutamicum ATCC 27853 and M.luteus ATCC 27853 and the Gram-negative-bacteria R.meliloti 102F34 and E.coli K12. The protein is Phylloxin-B1 of Phyllomedusa bicolor (Two-colored leaf frog).